Consider the following 510-residue polypeptide: Xylose import ATP-binding protein XylG (510 aa).

ABC transporter domains lie at 5 to 242 (LEMK…VGRE) and 259 to 505 (LRVE…LRSE). 37–44 (GENGSGKS) lines the ATP pocket.

This sequence belongs to the ABC transporter superfamily. Xylose importer (TC 3.A.1.2.4) family. The complex is composed of two ATP-binding proteins (XylG), two transmembrane proteins (XylH) and a solute-binding protein (XylF).

The protein localises to the cell inner membrane. It catalyses the reaction D-xylose(out) + ATP + H2O = D-xylose(in) + ADP + phosphate + H(+). In terms of biological role, part of the ABC transporter complex XylFGH involved in xylose import. Responsible for energy coupling to the transport system. The sequence is that of Xylose import ATP-binding protein XylG from Yersinia pestis.